A 212-amino-acid polypeptide reads, in one-letter code: Ribosomal RNA large subunit methyltransferase E (212 aa).

Over residues 1–10 (MATCRRRRRG) the composition is skewed to basic residues. A disordered region spans residues 1-24 (MATCRRRRRGCNSQARRSRHESDP). S-adenosyl-L-methionine-binding residues include G66, W68, D86, D102, and D127. K167 functions as the Proton acceptor in the catalytic mechanism.

It belongs to the class I-like SAM-binding methyltransferase superfamily. RNA methyltransferase RlmE family.

The protein localises to the cytoplasm. The catalysed reaction is uridine(2552) in 23S rRNA + S-adenosyl-L-methionine = 2'-O-methyluridine(2552) in 23S rRNA + S-adenosyl-L-homocysteine + H(+). Specifically methylates the uridine in position 2552 of 23S rRNA at the 2'-O position of the ribose in the fully assembled 50S ribosomal subunit. This Halorhodospira halophila (strain DSM 244 / SL1) (Ectothiorhodospira halophila (strain DSM 244 / SL1)) protein is Ribosomal RNA large subunit methyltransferase E.